The sequence spans 62 residues: UPF0291 protein CLM_2971 (62 aa).

This sequence belongs to the UPF0291 family.

It localises to the cytoplasm. In Clostridium botulinum (strain Kyoto / Type A2), this protein is UPF0291 protein CLM_2971.